Consider the following 246-residue polypeptide: NAD-dependent protein deacetylase (246 aa).

One can recognise a Deacetylase sirtuin-type domain in the interval 1–246; the sequence is MKKPDIQQLK…VIEEIVNSNS (246 aa). 7 residues coordinate NAD(+): Ala25, Phe36, Arg37, Gln106, Ile108, Asp109, and His124. Residue Phe36 coordinates nicotinamide. Residues Ile108 and Asp109 each coordinate nicotinamide. The active-site Proton acceptor is the His124. Zn(2+) contacts are provided by Cys132, Cys135, Cys152, and Cys155. Residues Ser193, Ser194, Asn216, and Asp233 each contribute to the NAD(+) site.

It belongs to the sirtuin family. Class U subfamily. The cofactor is Zn(2+).

It is found in the cytoplasm. The enzyme catalyses N(6)-acetyl-L-lysyl-[protein] + NAD(+) + H2O = 2''-O-acetyl-ADP-D-ribose + nicotinamide + L-lysyl-[protein]. Functionally, NAD-dependent protein deacetylase which modulates the activities of several enzymes which are inactive in their acetylated form. The protein is NAD-dependent protein deacetylase of Staphylococcus epidermidis (strain ATCC 12228 / FDA PCI 1200).